We begin with the raw amino-acid sequence, 367 residues long: Aldo-keto reductase AMT2 (367 aa).

Aspartate 76 contributes to the NADP(+) binding site. Catalysis depends on tyrosine 81, which acts as the Proton donor. Residue histidine 173 coordinates substrate. NADP(+) contacts are provided by residues 203-204 (SS), glutamine 229, 258-268 (GPLAAGKLARP), and 330-338 (SSVERMDEV). Residues 346-367 (LSDEEESRLEDPYKAQPPQGHS) form a disordered region.

It belongs to the aldo/keto reductase family.

Its pathway is mycotoxin biosynthesis. In terms of biological role, aldo-keto reductase; part of the gene clusters that mediate the biosynthesis of AM-toxins, host-selective toxins (HSTs) causing Alternaria blotch on apple, a worldwide distributed disease. AM-toxins are cyclic depsipeptides containing the 3 residues 2-hydroxy-isovaleric acid (2-HIV), dehydroalanine, L-alanine which are common for all 3 AM-toxins I to III. The fourth precursor is L-alpha-amino-methoxyphenyl-valeric acid (L-Amv) for AM-toxin I, L-alpha-amino-phenyl-valeric acid (L-Apv) for AM-toxin II, and L-alpha-amino-hydroxyphenyl-valeric acid (L-Ahv) for AM-toxin III. AM-toxins have two target sites for affecting susceptible apple cells; they cause invagination of the plasma membrane and electrolyte loss and chloroplast disorganization. The non-ribosomal peptide synthetase AMT1 contains 4 catalytic modules and is responsible for activation of each residue in AM-toxin. The aldo-keto reductase AMT2 catalyzes the conversion of 2-keto-isovaleric acid (2-KIV) to 2-hydroxy-isovaleric acid (2-HIV), one of the precursor residues incorporated by AMT1 during AM-toxin biosynthesis, by reduction of its ketone to an alcohol. The cytochrome P450 monooxygenase AMT3 and the thioesterase AMT4 are also important for AM-toxin production, but their exact function within the AM-toxin biosynthesis are not known yet. Up to 21 proteins (including AMT1 to AMT4) are predicted to be involved in AM-toxin biosynthesis since their expression ishighly up-regulated in AM-toxin-producing cultures. The polypeptide is Aldo-keto reductase AMT2 (Alternaria alternata (Alternaria rot fungus)).